A 212-amino-acid chain; its full sequence is Maleylacetoacetate isomerase (212 aa).

A GST N-terminal domain is found at M1–A83. Residues D88–A211 form the GST C-terminal domain.

This sequence belongs to the GST superfamily. Zeta family.

It catalyses the reaction 4-maleylacetoacetate = 4-fumarylacetoacetate. It functions in the pathway amino-acid degradation; L-phenylalanine degradation; acetoacetate and fumarate from L-phenylalanine: step 5/6. This chain is Maleylacetoacetate isomerase (maiA), found in Pseudomonas aeruginosa (strain ATCC 15692 / DSM 22644 / CIP 104116 / JCM 14847 / LMG 12228 / 1C / PRS 101 / PAO1).